The following is a 257-amino-acid chain: MLTLLSPAKKLLSISKHYSKETSNPLLLDKALQLVKIMKLKSVEQIADLMDLSKQLAELNYERYQNFDLKNNPMNHSYPALFLFQGDVYQGLNANSWKDEEIEYAQSHLGILSGLYGFLRPLDRIQPYRLEMGVNLENPAGKNLYAFWSKIVTNILNQILAEQSNPVLINLASTEYFKVVDEKKLSYPLVTINFYEQKNSELKMIGILAKKARGMMAKYIMQNRIDSIEQIKEFSESGYLFNKEISSPNSLNFIRIH.

The protein belongs to the UPF0246 family.

The protein is UPF0246 protein lpg1366 of Legionella pneumophila subsp. pneumophila (strain Philadelphia 1 / ATCC 33152 / DSM 7513).